The following is a 307-amino-acid chain: Ribosomal protein L11 methyltransferase (307 aa).

Residues Thr-144, Gly-165, Asp-187, and Asn-235 each coordinate S-adenosyl-L-methionine.

Belongs to the methyltransferase superfamily. PrmA family.

It is found in the cytoplasm. It carries out the reaction L-lysyl-[protein] + 3 S-adenosyl-L-methionine = N(6),N(6),N(6)-trimethyl-L-lysyl-[protein] + 3 S-adenosyl-L-homocysteine + 3 H(+). In terms of biological role, methylates ribosomal protein L11. In Psychrobacter sp. (strain PRwf-1), this protein is Ribosomal protein L11 methyltransferase.